Here is a 143-residue protein sequence, read N- to C-terminus: Insulin-like growth factor 1 (143 aa).

The N-terminal stretch at 1-32 is a signal peptide; the sequence is MITPTVKMRILSSSHLFYLALCLLTFTSSATA. The tract at residues 33 to 61 is b; that stretch reads GPETLCGAELVDALQFVCGDRGFYFNKPT. Cystine bridges form between C38–C80, C50–C93, and C79–C84. The interval 62-73 is c; that stretch reads GYGSSSRRAPQT. Residues 74-94 are a; it reads GIVDECCFRSCDLRRLEMYCA. A d region spans residues 95 to 102; the sequence is PLKPAKAA. The disordered stretch occupies residues 99-143; sequence AKAARSVRAQRHTDMPKTQKYQPPSTNKKMKSQRRRKGSTFEEHK. The propeptide at 103 to 143 is e peptide; sequence RSVRAQRHTDMPKTQKYQPPSTNKKMKSQRRRKGSTFEEHK. A compositionally biased stretch (basic residues) spans 126-136; it reads KKMKSQRRRKG.

The protein belongs to the insulin family. Forms a ternary complex with IGFR1 and ITGAV:ITGB3. Forms a ternary complex with IGFR1 and ITGA6:ITGB4. Forms a ternary complex with IGFBP3 and ALS.

Its subcellular location is the secreted. Its function is as follows. The insulin-like growth factors, isolated from plasma, are structurally and functionally related to insulin but have a much higher growth-promoting activity. May be a physiological regulator of [1-14C]-2-deoxy-D-glucose (2DG) transport and glycogen synthesis in osteoblasts. Stimulates glucose transport in bone-derived osteoblastic (PyMS) cells and is effective at much lower concentrations than insulin, not only regarding glycogen and DNA synthesis but also with regard to enhancing glucose uptake. May play a role in synapse maturation. Ca(2+)-dependent exocytosis of IGF1 is required for sensory perception of smell in the olfactory bulb. Acts as a ligand for IGF1R. Binds to the alpha subunit of IGF1R, leading to the activation of the intrinsic tyrosine kinase activity which autophosphorylates tyrosine residues in the beta subunit thus initiating a cascade of down-stream signaling events leading to activation of the PI3K-AKT/PKB and the Ras-MAPK pathways. Binds to integrins ITGAV:ITGB3 and ITGA6:ITGB4. Its binding to integrins and subsequent ternary complex formation with integrins and IGFR1 are essential for IGF1 signaling. Induces the phosphorylation and activation of IGFR1, MAPK3/ERK1, MAPK1/ERK2 and AKT1. As part of the MAPK/ERK signaling pathway, acts as a negative regulator of apoptosis in cardiomyocytes via promotion of STUB1/CHIP-mediated ubiquitination and degradation of ICER-type isoforms of CREM. In Oryctolagus cuniculus (Rabbit), this protein is Insulin-like growth factor 1.